The sequence spans 259 residues: Glucosamine-6-phosphate deaminase (259 aa).

Asp66 (proton acceptor; for enolization step) is an active-site residue. The For ring-opening step role is filled by Asp135. The active-site Proton acceptor; for ring-opening step is the His137. The active-site For ring-opening step is the Glu142.

It belongs to the glucosamine/galactosamine-6-phosphate isomerase family. NagB subfamily.

The catalysed reaction is alpha-D-glucosamine 6-phosphate + H2O = beta-D-fructose 6-phosphate + NH4(+). Its pathway is amino-sugar metabolism; N-acetylneuraminate degradation; D-fructose 6-phosphate from N-acetylneuraminate: step 5/5. Functionally, catalyzes the reversible isomerization-deamination of glucosamine 6-phosphate (GlcN6P) to form fructose 6-phosphate (Fru6P) and ammonium ion. This chain is Glucosamine-6-phosphate deaminase, found in Pseudarthrobacter chlorophenolicus (strain ATCC 700700 / DSM 12829 / CIP 107037 / JCM 12360 / KCTC 9906 / NCIMB 13794 / A6) (Arthrobacter chlorophenolicus).